An 84-amino-acid polypeptide reads, in one-letter code: uncharacterized protein (84 aa).

It to M.jannaschii MJ1121.

This is an uncharacterized protein from Archaeoglobus fulgidus (strain ATCC 49558 / DSM 4304 / JCM 9628 / NBRC 100126 / VC-16).